The sequence spans 351 residues: Quinolinate phosphoribosyltransferase [decarboxylating] 2b, mitochondrial (351 aa).

Residues arginine 142, 173–175 (TRK), arginine 197, lysine 207, glutamate 240, aspartate 267, 299–301 (SGN), and 320–322 (SGA) contribute to the substrate site.

The protein belongs to the NadC/ModD family. In terms of tissue distribution, expressed in roots and flowers.

The protein resides in the mitochondrion. It carries out the reaction nicotinate beta-D-ribonucleotide + CO2 + diphosphate = quinolinate + 5-phospho-alpha-D-ribose 1-diphosphate + 2 H(+). Its pathway is alkaloid biosynthesis; nicotine biosynthesis. It functions in the pathway cofactor biosynthesis; NAD(+) biosynthesis; nicotinate D-ribonucleotide from quinolinate: step 1/1. In terms of biological role, involved in the biosynthesis of pyridine alkaloid natural products, leading mainly to the production of anabasine, anatabine, nicotine and nornicotine, effective deterrents against herbivores with antiparasitic and pesticide properties (neurotoxins); nornicotine serves as the precursor in the synthesis of the carcinogen compound N'-nitrosonornicotine (NNN). Involved in the catabolism of quinolinic acid (QA). This is Quinolinate phosphoribosyltransferase [decarboxylating] 2b, mitochondrial from Nicotiana tabacum (Common tobacco).